Reading from the N-terminus, the 253-residue chain is Geranylgeranylglyceryl phosphate synthase (253 aa).

2 residues coordinate Mg(2+): aspartate 23 and serine 52. Residues 171–177 (YFEAGSG), 202–203 (GG), and 224–225 (GT) contribute to the sn-glycerol 1-phosphate site.

It belongs to the GGGP/HepGP synthase family. Group II subfamily. In terms of assembly, homodimer. Mg(2+) serves as cofactor.

It localises to the cytoplasm. It carries out the reaction sn-glycerol 1-phosphate + (2E,6E,10E)-geranylgeranyl diphosphate = sn-3-O-(geranylgeranyl)glycerol 1-phosphate + diphosphate. It functions in the pathway membrane lipid metabolism; glycerophospholipid metabolism. Its activity is regulated as follows. Inhibited by high concentrations of magnesium (&gt;10 mM) and by EDTA in vitro. In terms of biological role, prenyltransferase that catalyzes the transfer of the geranylgeranyl moiety of geranylgeranyl diphosphate (GGPP) to the C3 hydroxyl of sn-glycerol-1-phosphate (G1P). This reaction is the first ether-bond-formation step in the biosynthesis of archaeal membrane lipids. Cannot use sn-glycerol-3-phosphate (G3P) as substrate. This is Geranylgeranylglyceryl phosphate synthase from Thermoplasma acidophilum (strain ATCC 25905 / DSM 1728 / JCM 9062 / NBRC 15155 / AMRC-C165).